The primary structure comprises 106 residues: Large ribosomal subunit protein bL31B (106 aa).

The segment at 85-106 (PVQVAEEPVAKGKKKPSLKKKK) is disordered. Basic residues predominate over residues 95–106 (KGKKKPSLKKKK).

It belongs to the bacterial ribosomal protein bL31 family. Type B subfamily. Part of the 50S ribosomal subunit.

The polypeptide is Large ribosomal subunit protein bL31B (Chlamydia felis (strain Fe/C-56) (Chlamydophila felis)).